Consider the following 472-residue polypeptide: UDP-N-acetylmuramate--L-alanine ligase (472 aa).

Position 123–129 (123–129 (GSHGKTT)) interacts with ATP.

This sequence belongs to the MurCDEF family.

The protein resides in the cytoplasm. The enzyme catalyses UDP-N-acetyl-alpha-D-muramate + L-alanine + ATP = UDP-N-acetyl-alpha-D-muramoyl-L-alanine + ADP + phosphate + H(+). Its pathway is cell wall biogenesis; peptidoglycan biosynthesis. Its function is as follows. Cell wall formation. This chain is UDP-N-acetylmuramate--L-alanine ligase, found in Solibacter usitatus (strain Ellin6076).